The primary structure comprises 237 residues: Uridylate kinase (237 aa).

11–14 (KLSG) contacts ATP. Residues 18–23 (GGGGIG) are involved in allosteric activation by GTP. Gly52 is a UMP binding site. ATP-binding residues include Gly53 and Arg57. UMP-binding positions include Asp72 and 133–140 (SGMPYFST). Gln161, Tyr167, and Asp170 together coordinate ATP.

This sequence belongs to the UMP kinase family. Homohexamer.

The protein localises to the cytoplasm. It catalyses the reaction UMP + ATP = UDP + ADP. It functions in the pathway pyrimidine metabolism; CTP biosynthesis via de novo pathway; UDP from UMP (UMPK route): step 1/1. With respect to regulation, allosterically activated by GTP. Inhibited by UTP. Its function is as follows. Catalyzes the reversible phosphorylation of UMP to UDP. This Cutibacterium acnes (strain DSM 16379 / KPA171202) (Propionibacterium acnes) protein is Uridylate kinase.